The following is a 317-amino-acid chain: Single myb histone 6 (317 aa).

Residues 1–61 (MGAPKQRWTS…KWRNMNVIVS (61 aa)) enclose the HTH myb-type domain. A DNA-binding region (H-T-H motif) is located at residues 28–57 (WRTILKDPEFSSTLCYRSNVDLKDKWRNMN). Residues 121 to 189 (KSHRLDNIIM…KVNRKYRIAP (69 aa)) enclose the H15 domain. The stretch at 244–288 (VAAARAVAEAEAIMAEAEAAAKEAEAAEAEAQAAQAFAEAAFLTL) forms a coiled coil.

The protein belongs to the histone H1/H5 family. SMH subfamily. Forms a homodimer and heterodimers.

The protein localises to the nucleus. Its subcellular location is the chromosome. It is found in the nucleolus. It localises to the telomere. Functionally, binds preferentially double-stranded telomeric repeats, but may also bind to the single telomeric strand. The chain is Single myb histone 6 (SMH6) from Zea mays (Maize).